Reading from the N-terminus, the 156-residue chain is Ribosomal RNA large subunit methyltransferase H (156 aa).

S-adenosyl-L-methionine-binding positions include leucine 73, glycine 104, and leucine 123 to leucine 128.

This sequence belongs to the RNA methyltransferase RlmH family. Homodimer.

The protein resides in the cytoplasm. It carries out the reaction pseudouridine(1915) in 23S rRNA + S-adenosyl-L-methionine = N(3)-methylpseudouridine(1915) in 23S rRNA + S-adenosyl-L-homocysteine + H(+). In terms of biological role, specifically methylates the pseudouridine at position 1915 (m3Psi1915) in 23S rRNA. The protein is Ribosomal RNA large subunit methyltransferase H of Leptothrix cholodnii (strain ATCC 51168 / LMG 8142 / SP-6) (Leptothrix discophora (strain SP-6)).